Here is a 258-residue protein sequence, read N- to C-terminus: Imidazole glycerol phosphate synthase subunit HisF (258 aa).

Residues D12 and D131 contribute to the active site.

This sequence belongs to the HisA/HisF family. As to quaternary structure, heterodimer of HisH and HisF.

It localises to the cytoplasm. The catalysed reaction is 5-[(5-phospho-1-deoxy-D-ribulos-1-ylimino)methylamino]-1-(5-phospho-beta-D-ribosyl)imidazole-4-carboxamide + L-glutamine = D-erythro-1-(imidazol-4-yl)glycerol 3-phosphate + 5-amino-1-(5-phospho-beta-D-ribosyl)imidazole-4-carboxamide + L-glutamate + H(+). Its pathway is amino-acid biosynthesis; L-histidine biosynthesis; L-histidine from 5-phospho-alpha-D-ribose 1-diphosphate: step 5/9. IGPS catalyzes the conversion of PRFAR and glutamine to IGP, AICAR and glutamate. The HisF subunit catalyzes the cyclization activity that produces IGP and AICAR from PRFAR using the ammonia provided by the HisH subunit. The sequence is that of Imidazole glycerol phosphate synthase subunit HisF from Sinorhizobium medicae (strain WSM419) (Ensifer medicae).